A 488-amino-acid chain; its full sequence is Teichuronic acid biosynthesis protein TuaE (488 aa).

The next 14 membrane-spanning stretches (helical) occupy residues 7 to 29 (AVHT…GAIH), 35 to 57 (MQMA…ATAF), 64 to 86 (FMAV…AIHL), 91 to 110 (LFLY…FGMV), 122 to 144 (LQVK…SLLW), 154 to 173 (YLAL…MYVQ), 180 to 202 (IVYA…NHIT), 222 to 244 (PTSV…FFYI), 257 to 274 (AIGL…FATG), 279 to 298 (LLGI…PPVL), 303 to 322 (IWLS…SKIY), 354 to 376 (NAWH…SYYL), 397 to 419 (ILAN…LIWV), and 459 to 476 (LFFH…VNVL).

The protein localises to the cell membrane. The protein operates within cell wall biogenesis; teichuronic acid biosynthesis. Functionally, might be involved in the polymerization of teichuronic acid repeating units after their translocation to the outer surface of the membrane. In Bacillus subtilis (strain 168), this protein is Teichuronic acid biosynthesis protein TuaE (tuaE).